Consider the following 118-residue polypeptide: UPF0342 protein BT9727_0768 (118 aa).

It belongs to the UPF0342 family.

The polypeptide is UPF0342 protein BT9727_0768 (Bacillus thuringiensis subsp. konkukian (strain 97-27)).